The primary structure comprises 381 residues: Chaperone protein DnaJ (381 aa).

One can recognise a J domain in the interval 4-69 (DYYEILGVAR…EKRARYDQFG (66 aa)). The segment at 139–221 (GGEKELRVTR…CGGSGLVRKT (83 aa)) adopts a CR-type zinc-finger fold. Zn(2+) is bound by residues Cys152, Cys155, Cys169, Cys172, Cys195, Cys198, Cys209, and Cys212. CXXCXGXG motif repeat units follow at residues 152-159 (CGHCHGNG), 169-176 (CPTCQGRG), 195-202 (CSTCRGEG), and 209-216 (CRECGGSG).

The protein belongs to the DnaJ family. As to quaternary structure, homodimer. Zn(2+) is required as a cofactor.

The protein resides in the cytoplasm. Its function is as follows. Participates actively in the response to hyperosmotic and heat shock by preventing the aggregation of stress-denatured proteins and by disaggregating proteins, also in an autonomous, DnaK-independent fashion. Unfolded proteins bind initially to DnaJ; upon interaction with the DnaJ-bound protein, DnaK hydrolyzes its bound ATP, resulting in the formation of a stable complex. GrpE releases ADP from DnaK; ATP binding to DnaK triggers the release of the substrate protein, thus completing the reaction cycle. Several rounds of ATP-dependent interactions between DnaJ, DnaK and GrpE are required for fully efficient folding. Also involved, together with DnaK and GrpE, in the DNA replication of plasmids through activation of initiation proteins. The polypeptide is Chaperone protein DnaJ (Carboxydothermus hydrogenoformans (strain ATCC BAA-161 / DSM 6008 / Z-2901)).